A 254-amino-acid polypeptide reads, in one-letter code: 4-hydroxy-tetrahydrodipicolinate reductase (254 aa).

Residues G8–V13, G87–T89, and A111–M114 contribute to the NAD(+) site. H143 serves as the catalytic Proton donor/acceptor. H144 serves as a coordination point for (S)-2,3,4,5-tetrahydrodipicolinate. Catalysis depends on K147, which acts as the Proton donor. Position 153–154 (G153–T154) interacts with (S)-2,3,4,5-tetrahydrodipicolinate.

Belongs to the DapB family.

It is found in the cytoplasm. It carries out the reaction (S)-2,3,4,5-tetrahydrodipicolinate + NAD(+) + H2O = (2S,4S)-4-hydroxy-2,3,4,5-tetrahydrodipicolinate + NADH + H(+). It catalyses the reaction (S)-2,3,4,5-tetrahydrodipicolinate + NADP(+) + H2O = (2S,4S)-4-hydroxy-2,3,4,5-tetrahydrodipicolinate + NADPH + H(+). Its pathway is amino-acid biosynthesis; L-lysine biosynthesis via DAP pathway; (S)-tetrahydrodipicolinate from L-aspartate: step 4/4. Catalyzes the conversion of 4-hydroxy-tetrahydrodipicolinate (HTPA) to tetrahydrodipicolinate. In Nitratiruptor sp. (strain SB155-2), this protein is 4-hydroxy-tetrahydrodipicolinate reductase.